The chain runs to 259 residues: Probable UMP-CMP kinase 2 (259 aa).

63–68 lines the ATP pocket; it reads GSGKGT. The tract at residues 83–112 is NMP; it reads SAGDLLRREIAMHTENGAMILNLIKDGKIV. Residues R89, 110 to 112, and 137 to 140 contribute to the a ribonucleoside 5'-phosphate site; these read KIV and GFPR. N144 contributes to the CMP binding site. Positions 175 to 183 are LID; it reads NRNQGRIDD. R176 serves as a coordination point for ATP. 2 residues coordinate a ribonucleoside 5'-phosphate: R180 and R191. G219 contacts ATP.

This sequence belongs to the adenylate kinase family. UMP-CMP kinase subfamily. Monomer. Mg(2+) is required as a cofactor.

The protein localises to the cytoplasm. It localises to the nucleus. The enzyme catalyses CMP + ATP = CDP + ADP. It carries out the reaction dCMP + ATP = dCDP + ADP. It catalyses the reaction UMP + ATP = UDP + ADP. Functionally, catalyzes the phosphorylation of pyrimidine nucleoside monophosphates at the expense of ATP. Plays an important role in de novo pyrimidine nucleotide biosynthesis. Has preference for UMP and CMP as phosphate acceptors. This is Probable UMP-CMP kinase 2 (UMK2) from Arabidopsis thaliana (Mouse-ear cress).